We begin with the raw amino-acid sequence, 235 residues long: Bypass of stop codon protein 2 (235 aa).

The chain crosses the membrane as a helical span at residues 68–88 (FGIFQLMCSLGVIVLLLPIII). A Phosphoserine modification is found at S177.

It localises to the lipid droplet. The protein resides in the membrane. The polypeptide is Bypass of stop codon protein 2 (BSC2) (Saccharomyces cerevisiae (strain ATCC 204508 / S288c) (Baker's yeast)).